The sequence spans 656 residues: DNA ligase (656 aa).

Residues 32–36 and 81–82 each bind NAD(+); these read DAVYD and SL. The active-site N6-AMP-lysine intermediate is the Lys112. 3 residues coordinate NAD(+): Arg133, Glu167, and Lys306. Zn(2+) contacts are provided by Cys400, Cys403, Cys416, and Cys421. Residues 577-656 enclose the BRCT domain; it reads KSSSVFNNKT…ELLKRLKELD (80 aa).

Belongs to the NAD-dependent DNA ligase family. LigA subfamily. Requires Mg(2+) as cofactor. Mn(2+) serves as cofactor.

The enzyme catalyses NAD(+) + (deoxyribonucleotide)n-3'-hydroxyl + 5'-phospho-(deoxyribonucleotide)m = (deoxyribonucleotide)n+m + AMP + beta-nicotinamide D-nucleotide.. DNA ligase that catalyzes the formation of phosphodiester linkages between 5'-phosphoryl and 3'-hydroxyl groups in double-stranded DNA using NAD as a coenzyme and as the energy source for the reaction. It is essential for DNA replication and repair of damaged DNA. In Helicobacter pylori (strain HPAG1), this protein is DNA ligase.